A 459-amino-acid polypeptide reads, in one-letter code: Bifunctional protein GlmU (459 aa).

The tract at residues 1–230 is pyrophosphorylase; that stretch reads MSNRFAVILA…FDETLGVNDR (230 aa). Residues 9–12, K23, Q73, and 78–79 each bind UDP-N-acetyl-alpha-D-glucosamine; these read LAAG and GT. Mg(2+) is bound at residue D103. Residues G140, E155, N170, and N228 each coordinate UDP-N-acetyl-alpha-D-glucosamine. N228 contacts Mg(2+). Positions 231–251 are linker; sequence VALSQAEIIMKNRINRKNMVN. Positions 252 to 459 are N-acetyltransferase; the sequence is GVTIIDPSNT…VDQLLNKKKS (208 aa). UDP-N-acetyl-alpha-D-glucosamine-binding residues include R333 and K351. Catalysis depends on H363, which acts as the Proton acceptor. UDP-N-acetyl-alpha-D-glucosamine contacts are provided by Y366 and N377. Acetyl-CoA contacts are provided by residues 386 to 387, A423, and R440; that span reads NY.

This sequence in the N-terminal section; belongs to the N-acetylglucosamine-1-phosphate uridyltransferase family. It in the C-terminal section; belongs to the transferase hexapeptide repeat family. As to quaternary structure, homotrimer. The cofactor is Mg(2+).

It localises to the cytoplasm. It carries out the reaction alpha-D-glucosamine 1-phosphate + acetyl-CoA = N-acetyl-alpha-D-glucosamine 1-phosphate + CoA + H(+). It catalyses the reaction N-acetyl-alpha-D-glucosamine 1-phosphate + UTP + H(+) = UDP-N-acetyl-alpha-D-glucosamine + diphosphate. It functions in the pathway nucleotide-sugar biosynthesis; UDP-N-acetyl-alpha-D-glucosamine biosynthesis; N-acetyl-alpha-D-glucosamine 1-phosphate from alpha-D-glucosamine 6-phosphate (route II): step 2/2. The protein operates within nucleotide-sugar biosynthesis; UDP-N-acetyl-alpha-D-glucosamine biosynthesis; UDP-N-acetyl-alpha-D-glucosamine from N-acetyl-alpha-D-glucosamine 1-phosphate: step 1/1. Its pathway is bacterial outer membrane biogenesis; LPS lipid A biosynthesis. Its function is as follows. Catalyzes the last two sequential reactions in the de novo biosynthetic pathway for UDP-N-acetylglucosamine (UDP-GlcNAc). The C-terminal domain catalyzes the transfer of acetyl group from acetyl coenzyme A to glucosamine-1-phosphate (GlcN-1-P) to produce N-acetylglucosamine-1-phosphate (GlcNAc-1-P), which is converted into UDP-GlcNAc by the transfer of uridine 5-monophosphate (from uridine 5-triphosphate), a reaction catalyzed by the N-terminal domain. This is Bifunctional protein GlmU from Bacillus cereus (strain ZK / E33L).